The following is a 507-amino-acid chain: Glycerol kinase (507 aa).

T14 lines the ADP pocket. ATP is bound by residues T14, T15, and S16. Position 14 (T14) interacts with sn-glycerol 3-phosphate. R18 contributes to the ADP binding site. R84, E85, Y137, and D247 together coordinate sn-glycerol 3-phosphate. Residues R84, E85, Y137, D247, and Q248 each contribute to the glycerol site. T269 and G312 together coordinate ADP. ATP contacts are provided by T269, G312, Q316, and G413. Residues G413 and N417 each contribute to the ADP site.

Belongs to the FGGY kinase family.

It carries out the reaction glycerol + ATP = sn-glycerol 3-phosphate + ADP + H(+). It functions in the pathway polyol metabolism; glycerol degradation via glycerol kinase pathway; sn-glycerol 3-phosphate from glycerol: step 1/1. Inhibited by fructose 1,6-bisphosphate (FBP). Key enzyme in the regulation of glycerol uptake and metabolism. Catalyzes the phosphorylation of glycerol to yield sn-glycerol 3-phosphate. The chain is Glycerol kinase from Psychromonas ingrahamii (strain DSM 17664 / CCUG 51855 / 37).